Reading from the N-terminus, the 357-residue chain is (+)-eremophilene synthase (357 aa).

Positions 100 and 105 each coordinate Mg(2+). Residues 100 to 105 (DDDFDE) carry the DDXXE motif motif. R198 lines the substrate pocket. Residues N244 and S248 each contribute to the Mg(2+) site. K251 contributes to the substrate binding site. D252 is a binding site for Mg(2+). Substrate is bound at residue 331-332 (RY).

It belongs to the terpene synthase family. The cofactor is Mg(2+).

It catalyses the reaction (2E,6E)-farnesyl diphosphate = (+)-eremophilene + diphosphate. It functions in the pathway secondary metabolite biosynthesis; terpenoid biosynthesis. Functionally, catalyzes the conversion of (2E,6E)-farnesyl diphosphate (FPP) to yield the bicyclic sesquiterpene eremophilene via a 1,10-cyclization, which requires the abstraction of the pyrophosphate from FPP to yield the (E,E)-germacradienyl cation. The only accepted substrate is farnesyl diphosphate (FPP). The protein is (+)-eremophilene synthase of Gibberella fujikuroi (strain CBS 195.34 / IMI 58289 / NRRL A-6831) (Bakanae and foot rot disease fungus).